We begin with the raw amino-acid sequence, 331 residues long: 6-phosphogluconolactonase (331 aa).

This sequence belongs to the cycloisomerase 2 family.

The catalysed reaction is 6-phospho-D-glucono-1,5-lactone + H2O = 6-phospho-D-gluconate + H(+). Its pathway is carbohydrate degradation; pentose phosphate pathway; D-ribulose 5-phosphate from D-glucose 6-phosphate (oxidative stage): step 2/3. Functionally, catalyzes the hydrolysis of 6-phosphogluconolactone to 6-phosphogluconate. This chain is 6-phosphogluconolactonase, found in Klebsiella pneumoniae (strain 342).